Reading from the N-terminus, the 220-residue chain is Probable GTP-binding protein EngB (220 aa).

The EngB-type G domain maps to 31 to 205 (AGVEIAFAGR…LGILNEWCHP (175 aa)). GTP is bound by residues 39–46 (GRSNAGKS), 66–70 (GRTQL), 84–87 (DLPG), 151–154 (TKAD), and 184–186 (FSS). Positions 46 and 68 each coordinate Mg(2+).

It belongs to the TRAFAC class TrmE-Era-EngA-EngB-Septin-like GTPase superfamily. EngB GTPase family. Mg(2+) is required as a cofactor.

In terms of biological role, necessary for normal cell division and for the maintenance of normal septation. The protein is Probable GTP-binding protein EngB of Shewanella sediminis (strain HAW-EB3).